Here is a 196-residue protein sequence, read N- to C-terminus: Recombination protein RecR (196 aa).

Residues 57-72 (CERCHTFTEGAVCETC) form a C4-type zinc finger. The 96-residue stretch at 80–175 (TRLCVVETPA…HVTRLARGVP (96 aa)) folds into the Toprim domain.

This sequence belongs to the RecR family.

Its function is as follows. May play a role in DNA repair. It seems to be involved in an RecBC-independent recombinational process of DNA repair. It may act with RecF and RecO. In Acidovorax sp. (strain JS42), this protein is Recombination protein RecR.